Here is a 355-residue protein sequence, read N- to C-terminus: MQVSDFHFDLPDELIARYPMAERTASRLLQLDGQSGALRHGQFVDVLDQLNPGDLLVFNNTRVIPARMFGQKASGGKLEVLVERILDEHSVLAHVRASKAPKPGTRLILDGGPDGEKVDAEMRARHDALFEIHFLDPRPVLEILEAIGHMPLPPYIDRPDEDADKERYQTVYNQKPGAVAAPTAGLHFDEPLLAKIRAKGVETAFVTLHVGAGTFQPVRVDKIEDHHMHSEYAEVPQEVVDAIAATRARGGRVIAVGTTSVRSLESAAKASLALSKPLAPFFSDTDIFIFPGYQFQVVDAMVTNFHLPESTLIMLVSAFAGYDHVMAAYQAAVAEQYRFFSYGDAMFVTRRRAVA.

It belongs to the QueA family. Monomer.

Its subcellular location is the cytoplasm. The catalysed reaction is 7-aminomethyl-7-carbaguanosine(34) in tRNA + S-adenosyl-L-methionine = epoxyqueuosine(34) in tRNA + adenine + L-methionine + 2 H(+). It functions in the pathway tRNA modification; tRNA-queuosine biosynthesis. Functionally, transfers and isomerizes the ribose moiety from AdoMet to the 7-aminomethyl group of 7-deazaguanine (preQ1-tRNA) to give epoxyqueuosine (oQ-tRNA). The chain is S-adenosylmethionine:tRNA ribosyltransferase-isomerase from Aeromonas salmonicida (strain A449).